Consider the following 155-residue polypeptide: 3-hydroxyacyl-[acyl-carrier-protein] dehydratase FabZ (155 aa).

His-61 is a catalytic residue.

The protein belongs to the thioester dehydratase family. FabZ subfamily.

It is found in the cytoplasm. The catalysed reaction is a (3R)-hydroxyacyl-[ACP] = a (2E)-enoyl-[ACP] + H2O. Its function is as follows. Involved in unsaturated fatty acids biosynthesis. Catalyzes the dehydration of short chain beta-hydroxyacyl-ACPs and long chain saturated and unsaturated beta-hydroxyacyl-ACPs. The sequence is that of 3-hydroxyacyl-[acyl-carrier-protein] dehydratase FabZ from Synechococcus sp. (strain ATCC 27144 / PCC 6301 / SAUG 1402/1) (Anacystis nidulans).